Reading from the N-terminus, the 147-residue chain is Allograft inflammatory factor 1 (147 aa).

Serine 2 is subject to N-acetylserine. An N6-acetyllysine modification is found at lysine 11. A Phosphoserine modification is found at serine 39. EF-hand domains follow at residues 45–80 (SKLE…LGVP) and 81–115 (KTHL…GKRS). Ca(2+) contacts are provided by aspartate 58, asparagine 60, asparagine 62, aspartate 64, threonine 100, and aspartate 105. The disordered stretch occupies residues 128 to 147 (AREKEKPTGPPAKKAISELP).

As to quaternary structure, homodimer (Potential). Monomer. Interacts with LCP1. In terms of processing, phosphorylated on serine residues.

The protein resides in the cytoplasm. Its subcellular location is the cytoskeleton. It is found in the cell projection. The protein localises to the ruffle membrane. It localises to the phagocytic cup. In terms of biological role, actin-binding protein that enhances membrane ruffling and RAC activation. Enhances the actin-bundling activity of LCP1. Binds calcium. Plays a role in RAC signaling and in phagocytosis. May play a role in macrophage activation and function. Promotes the proliferation of vascular smooth muscle cells and of T-lymphocytes. Enhances lymphocyte migration. Plays a role in vascular inflammation. This is Allograft inflammatory factor 1 (AIF1) from Macaca mulatta (Rhesus macaque).